The chain runs to 249 residues: Proteasome subunit alpha type-3 (249 aa).

It belongs to the peptidase T1A family. The 26S proteasome consists of a 20S proteasome core and two 19S regulatory subunits. The 20S proteasome core is composed of 28 subunits that are arranged in four stacked rings, resulting in a barrel-shaped structure. The two end rings are each formed by seven alpha subunits, and the two central rings are each formed by seven beta subunits. The catalytic chamber with the active sites is on the inside of the barrel.

It localises to the cytoplasm. It is found in the nucleus. Functionally, the proteasome is a multicatalytic proteinase complex which is characterized by its ability to cleave peptides with Arg, Phe, Tyr, Leu, and Glu adjacent to the leaving group at neutral or slightly basic pH. The proteasome has an ATP-dependent proteolytic activity. The sequence is that of Proteasome subunit alpha type-3 (PAG1) from Spinacia oleracea (Spinach).